The primary structure comprises 199 residues: Pyridoxal 5'-phosphate synthase subunit PdxT (199 aa).

47-49 (GES) is a binding site for L-glutamine. C79 acts as the Nucleophile in catalysis. Residues R106 and 133-134 (IR) contribute to the L-glutamine site. Catalysis depends on charge relay system residues H169 and E171.

It belongs to the glutaminase PdxT/SNO family. As to quaternary structure, in the presence of PdxS, forms a dodecamer of heterodimers. Only shows activity in the heterodimer.

The catalysed reaction is aldehydo-D-ribose 5-phosphate + D-glyceraldehyde 3-phosphate + L-glutamine = pyridoxal 5'-phosphate + L-glutamate + phosphate + 3 H2O + H(+). The enzyme catalyses L-glutamine + H2O = L-glutamate + NH4(+). Its pathway is cofactor biosynthesis; pyridoxal 5'-phosphate biosynthesis. Its function is as follows. Catalyzes the hydrolysis of glutamine to glutamate and ammonia as part of the biosynthesis of pyridoxal 5'-phosphate. The resulting ammonia molecule is channeled to the active site of PdxS. This chain is Pyridoxal 5'-phosphate synthase subunit PdxT, found in Desulfitobacterium hafniense (strain Y51).